Reading from the N-terminus, the 319-residue chain is Acyl-coenzyme A thioesterase 8 (319 aa).

A disordered region spans residues M1–P20. Active-site charge relay system residues include D232, S254, and Q304. A Microbody targeting signal motif is present at residues S317–L319.

Belongs to the C/M/P thioester hydrolase family. Homodimer. In terms of assembly, (Microbial infection) Interacts with human immunodeficiency virus (HIV-1) Nef (via middle region); this interaction enhances ACOT8 Acyl-CoA thioesterase activity and occurs in a Nef myristoylation-independent manner. According to a second report, the interaction with HIV-1 Nef occurs in a Nef myristoylation-independent manner but does not enhance ACOT8 Acyl-CoA thioesterase activity. In terms of tissue distribution, detected in a T-cell line (at protein level). Ubiquitous.

It localises to the peroxisome matrix. The catalysed reaction is choloyl-CoA + H2O = cholate + CoA + H(+). It carries out the reaction chenodeoxycholoyl-CoA + H2O = chenodeoxycholate + CoA + H(+). The enzyme catalyses acetyl-CoA + H2O = acetate + CoA + H(+). It catalyses the reaction butanoyl-CoA + H2O = butanoate + CoA + H(+). The catalysed reaction is 2-methylpropanoyl-CoA + H2O = 2-methylpropanoate + CoA + H(+). It carries out the reaction hexanoyl-CoA + H2O = hexanoate + CoA + H(+). The enzyme catalyses octanoyl-CoA + H2O = octanoate + CoA + H(+). It catalyses the reaction decanoyl-CoA + H2O = decanoate + CoA + H(+). The catalysed reaction is dodecanoyl-CoA + H2O = dodecanoate + CoA + H(+). It carries out the reaction tetradecanoyl-CoA + H2O = tetradecanoate + CoA + H(+). The enzyme catalyses hexadecanoyl-CoA + H2O = hexadecanoate + CoA + H(+). It catalyses the reaction octadecanoyl-CoA + H2O = octadecanoate + CoA + H(+). The catalysed reaction is malonyl-CoA + H2O = malonate + CoA + H(+). It carries out the reaction acetoacetyl-CoA + H2O = acetoacetate + CoA + H(+). The enzyme catalyses propanoyl-CoA + H2O = propanoate + CoA + H(+). It catalyses the reaction succinyl-CoA + H2O = succinate + CoA + H(+). The catalysed reaction is glutaryl-CoA + H2O = glutarate + CoA + H(+). It carries out the reaction hexanedioyl-CoA + H2O = hexanedioate + CoA + H(+). The enzyme catalyses octanedioyl-CoA + H2O = octanedioate + CoA + H(+). It catalyses the reaction decanedioyl-CoA + H2O = decanedioate + CoA + H(+). The catalysed reaction is dodecanedioyl-CoA + H2O = dodecanedioate + CoA + H(+). It carries out the reaction (9Z)-tetradecenoyl-CoA + H2O = (9Z)-tetradecenoate + CoA + H(+). The enzyme catalyses (9Z)-hexadecenoyl-CoA + H2O = (9Z)-hexadecenoate + CoA + H(+). It catalyses the reaction (9Z)-octadecenoyl-CoA + H2O = (9Z)-octadecenoate + CoA + H(+). The catalysed reaction is (9Z,12Z)-octadecadienoyl-CoA + H2O = (9Z,12Z)-octadecadienoate + CoA + H(+). It carries out the reaction eicosanoyl-CoA + H2O = eicosanoate + CoA + H(+). The enzyme catalyses (5Z,8Z,11Z,14Z)-eicosatetraenoyl-CoA + H2O = (5Z,8Z,11Z,14Z)-eicosatetraenoate + CoA + H(+). It catalyses the reaction 4,8-dimethylnonanoyl-CoA + H2O = 4,8-dimethylnonanoate + CoA + H(+). The catalysed reaction is 2,6-dimethylheptanoyl-CoA + H2O = 2,6-dimethylheptanoate + CoA + H(+). It carries out the reaction (3S)-3-hydroxy-3-methylglutaryl-CoA + H2O = 3-hydroxy-3-methylglutarate + CoA + H(+). The enzyme catalyses 3alpha,7alpha,12alpha-trihydroxy-5beta-cholestan-26-oyl-CoA + H2O = 3alpha,7alpha,12alpha-trihydroxy-5beta-cholestan-26-oate + CoA + H(+). It catalyses the reaction 2-methyloctadecanoyl-CoA + H2O = 2-methyloctadecanoate + CoA + H(+). The catalysed reaction is prostaglandin F2alpha-CoA + H2O = prostaglandin F2alpha + CoA + H(+). The protein operates within lipid metabolism; fatty acid metabolism. Its activity is regulated as follows. Inhibited by CoASH (IC(50)=10-15 uM). Also inhibited by cysteine-reactive agents. In terms of biological role, catalyzes the hydrolysis of acyl-CoAs into free fatty acids and coenzyme A (CoASH), regulating their respective intracellular levels. Displays no strong substrate specificity with respect to the carboxylic acid moiety of Acyl-CoAs. Hydrolyzes medium length (C2 to C20) straight-chain, saturated and unsaturated acyl-CoAS but is inactive towards substrates with longer aliphatic chains. Moreover, it catalyzes the hydrolysis of CoA esters of bile acids, such as choloyl-CoA and chenodeoxycholoyl-CoA and competes with bile acid CoA:amino acid N-acyltransferase (BAAT). Is also able to hydrolyze CoA esters of dicarboxylic acids. It is involved in the metabolic regulation of peroxisome proliferation. Its function is as follows. (Microbial infection) May mediate Nef-induced down-regulation of CD4 cell-surface expression. In Homo sapiens (Human), this protein is Acyl-coenzyme A thioesterase 8 (ACOT8).